Here is a 357-residue protein sequence, read N- to C-terminus: DNA replication and repair protein RecF (357 aa).

31–38 provides a ligand contact to ATP; sequence GQNGAGKT.

This sequence belongs to the RecF family.

It localises to the cytoplasm. In terms of biological role, the RecF protein is involved in DNA metabolism; it is required for DNA replication and normal SOS inducibility. RecF binds preferentially to single-stranded, linear DNA. It also seems to bind ATP. In Coxiella burnetii (strain CbuK_Q154) (Coxiella burnetii (strain Q154)), this protein is DNA replication and repair protein RecF.